The chain runs to 204 residues: Urease accessory protein UreG (204 aa).

Residue glycine 13 to threonine 20 participates in GTP binding.

It belongs to the SIMIBI class G3E GTPase family. UreG subfamily. In terms of assembly, homodimer. UreD, UreF and UreG form a complex that acts as a GTP-hydrolysis-dependent molecular chaperone, activating the urease apoprotein by helping to assemble the nickel containing metallocenter of UreC. The UreE protein probably delivers the nickel.

It is found in the cytoplasm. Facilitates the functional incorporation of the urease nickel metallocenter. This process requires GTP hydrolysis, probably effectuated by UreG. The protein is Urease accessory protein UreG of Acinetobacter baumannii (strain AB307-0294).